A 174-amino-acid chain; its full sequence is NADH-quinone oxidoreductase subunit B (174 aa).

Residues Cys-51, Cys-52, Cys-116, and Cys-146 each coordinate [4Fe-4S] cluster.

It belongs to the complex I 20 kDa subunit family. In terms of assembly, NDH-1 is composed of 14 different subunits. Subunits NuoB, C, D, E, F, and G constitute the peripheral sector of the complex. Requires [4Fe-4S] cluster as cofactor.

The protein resides in the cell inner membrane. The enzyme catalyses a quinone + NADH + 5 H(+)(in) = a quinol + NAD(+) + 4 H(+)(out). In terms of biological role, NDH-1 shuttles electrons from NADH, via FMN and iron-sulfur (Fe-S) centers, to quinones in the respiratory chain. The immediate electron acceptor for the enzyme in this species is believed to be ubiquinone. Couples the redox reaction to proton translocation (for every two electrons transferred, four hydrogen ions are translocated across the cytoplasmic membrane), and thus conserves the redox energy in a proton gradient. This is NADH-quinone oxidoreductase subunit B from Anaplasma phagocytophilum (strain HZ).